The chain runs to 379 residues: UDP-4-amino-4-deoxy-L-arabinose--oxoglutarate aminotransferase (379 aa).

Position 182 is an N6-(pyridoxal phosphate)lysine (Lys182).

Belongs to the DegT/DnrJ/EryC1 family. ArnB subfamily. Homodimer. Pyridoxal 5'-phosphate serves as cofactor.

The enzyme catalyses UDP-4-amino-4-deoxy-beta-L-arabinose + 2-oxoglutarate = UDP-beta-L-threo-pentopyranos-4-ulose + L-glutamate. The protein operates within nucleotide-sugar biosynthesis; UDP-4-deoxy-4-formamido-beta-L-arabinose biosynthesis; UDP-4-deoxy-4-formamido-beta-L-arabinose from UDP-alpha-D-glucuronate: step 2/3. It functions in the pathway bacterial outer membrane biogenesis; lipopolysaccharide biosynthesis. Its function is as follows. Catalyzes the conversion of UDP-4-keto-arabinose (UDP-Ara4O) to UDP-4-amino-4-deoxy-L-arabinose (UDP-L-Ara4N). The modified arabinose is attached to lipid A and is required for resistance to polymyxin and cationic antimicrobial peptides. This Enterobacter sp. (strain 638) protein is UDP-4-amino-4-deoxy-L-arabinose--oxoglutarate aminotransferase.